The following is a 288-amino-acid chain: Homoserine kinase (288 aa).

79-89 (PPARGLGSSSA) lines the ATP pocket.

Belongs to the GHMP kinase family. Homoserine kinase subfamily.

It localises to the cytoplasm. The enzyme catalyses L-homoserine + ATP = O-phospho-L-homoserine + ADP + H(+). It functions in the pathway amino-acid biosynthesis; L-threonine biosynthesis; L-threonine from L-aspartate: step 4/5. Catalyzes the ATP-dependent phosphorylation of L-homoserine to L-homoserine phosphate. This Listeria monocytogenes serovar 1/2a (strain ATCC BAA-679 / EGD-e) protein is Homoserine kinase.